We begin with the raw amino-acid sequence, 120 residues long: MKSTRKSATQRRHRRLRRHLSGTSERPRLAVFRSNDHIYAQVIDDVAQHTLAAASTLDPDLKKSLSSTATQEASAEVGKLVAQRAIAKGINQVVFDRGGKLYHGRVKALAEAAREAGLNF.

Positions 1–20 (MKSTRKSATQRRHRRLRRHL) are enriched in basic residues. The interval 1 to 26 (MKSTRKSATQRRHRRLRRHLSGTSER) is disordered.

This sequence belongs to the universal ribosomal protein uL18 family. In terms of assembly, part of the 50S ribosomal subunit; part of the 5S rRNA/L5/L18/L25 subcomplex. Contacts the 5S and 23S rRNAs.

Functionally, this is one of the proteins that bind and probably mediate the attachment of the 5S RNA into the large ribosomal subunit, where it forms part of the central protuberance. The sequence is that of Large ribosomal subunit protein uL18 from Synechocystis sp. (strain ATCC 27184 / PCC 6803 / Kazusa).